We begin with the raw amino-acid sequence, 215 residues long: Vesicle-trafficking protein SEC22b (215 aa).

Residues 1-194 (MVLLTMIARV…KYLNMRSTYA (194 aa)) are Cytoplasmic-facing. Residues 6-119 (MIARVADGLP…YSFIEFDTFI (114 aa)) form the Longin domain. The residue at position 38 (lysine 38) is an N6-acetyllysine. In terms of domain architecture, v-SNARE coiled-coil homology spans 134–194 (NLGSINTELQ…KYLNMRSTYA (61 aa)). Serine 137 carries the post-translational modification Phosphoserine. The residue at position 140 (threonine 140) is a Phosphothreonine. Serine 164, serine 168, serine 174, and serine 177 each carry phosphoserine. A helical; Anchor for type IV membrane protein transmembrane segment spans residues 195-215 (KLAAVAVFFIMLIVYVRFWWL).

The protein belongs to the synaptobrevin family. Interacts with STX17. Component of two distinct SNARE complexes consisting of STX5, GOSR2/BOS1, BET1 and SEC22B or STX18, USE1L, BNIP1/SEC20L and SEC22B. YKT6 can probably replace SEC22B as subunit of either complex. Interacts with the COPII Sec23/24 complex composed of SEC23A and SEC24A; recruits SEC22B into COPII-coated vesicles to allow its transport from the endoplasmic reticulum to the Golgi. Interacts with BET1.

The protein resides in the endoplasmic reticulum membrane. The protein localises to the endoplasmic reticulum-Golgi intermediate compartment membrane. It is found in the golgi apparatus. It localises to the cis-Golgi network membrane. Its subcellular location is the trans-Golgi network membrane. The protein resides in the melanosome. Functionally, SNARE involved in targeting and fusion of ER-derived transport vesicles with the Golgi complex as well as Golgi-derived retrograde transport vesicles with the ER. The protein is Vesicle-trafficking protein SEC22b (Sec22b) of Cricetulus griseus (Chinese hamster).